The chain runs to 174 residues: MSLFRYNPRDYFYTSPMERFIVNLLDNTFDDRSSRPLHSVAPYWLHQPELNECNIGNTLGEVINEKDKFAVRADVSHFHPKELSVSVRDRELVIEGHHKERADSAGHGSIERHFIRKYVLPEEVQPDTIESHLSDKGVLTICANKTAVGTTASRNIPIRASPKEPEAKQKTKKQ.

The sHSP domain maps to 50 to 161 (LNECNIGNTL…ASRNIPIRAS (112 aa)). Positions 153–174 (SRNIPIRASPKEPEAKQKTKKQ) are disordered. Positions 161 to 174 (SPKEPEAKQKTKKQ) are enriched in basic and acidic residues.

This sequence belongs to the small heat shock protein (HSP20) family.

This Onchocerca volvulus protein is Small heat shock protein OV25-1 (OV25-1).